Here is a 76-residue protein sequence, read N- to C-terminus: Exodeoxyribonuclease 7 small subunit (76 aa).

It belongs to the XseB family. In terms of assembly, heterooligomer composed of large and small subunits.

The protein localises to the cytoplasm. The enzyme catalyses Exonucleolytic cleavage in either 5'- to 3'- or 3'- to 5'-direction to yield nucleoside 5'-phosphates.. Bidirectionally degrades single-stranded DNA into large acid-insoluble oligonucleotides, which are then degraded further into small acid-soluble oligonucleotides. The chain is Exodeoxyribonuclease 7 small subunit from Arthrobacter sp. (strain FB24).